A 764-amino-acid polypeptide reads, in one-letter code: MRPGSLLLLVLLLALSRSLRGKECASPPCECHQEDDFRVTCKELHRIPSLPPSTQTLKLIETHLKTIPSLAFSSLPNISRIYLSIDATLQRLEPHSFYNLSKMTHIEIRNTRSLTYIDPDALTELPLLKFLGIFNTGLRIFPDLTKIYSTDIFFILEITDNPYMTSVPENAFQGLCNETLTLKLYNNGFTSVQGHAFNGTKLDAVYLNKNKYLTAIDNDAFGGVYSGPTLLDVSSTSVTALPSKGLEHLKELIAKDTWTLKKLPLSLSFLHLTRADLSYPSHCCAFKNQKKIRGILESLMCNESSIRNLRQRKSVNILRGPIYQEYEEDPGDNSVGYKQNSKFQESPSNSHYYVFFEEQEDEVVGFGQELKNPQEETLQAFESHYDYTVCGDNEDMVCTPKSDEFNPCEDIMGYRFLRIVVWFVSLLALLGNIFVLLILLTSHYKLTVPRFLMCNLAFADFCMGVYLLLIASVDLYTHSEYYNHAIDWQTGPGCNTAGFFTVFASELSVYTLTVITLERWYAITFAMRLDRKIRLRHAYTIMAGGWVSCFLLALLPMVGISSYAKVSICLPMDTDTPLALAYIVLVLLLNVVAFVVVCSCYVKIYITVRNPQYNPRDKDTKIAKRMAVLIFTDFMCMAPISFYALSALMNKPLITVTNSKILLVLFYPLNSCANPFLYAIFTKAFQRDVFILLSKFGICKRQAQAYQGQRVCPNNSTGIQIQKIPQDTRQSLPNMQDTYELLGNSQLAPKLQGQISEEYKQTAL.

The first 21 residues, 1-21 (MRPGSLLLLVLLLALSRSLRG), serve as a signal peptide directing secretion. The Extracellular portion of the chain corresponds to 22 to 413 (KECASPPCEC…EFNPCEDIMG (392 aa)). An intrachain disulfide couples C31 to C41. N-linked (GlcNAc...) asparagine glycosylation is found at N77 and N99. LRR repeat units follow at residues 100–124 (LSKMTHIEIRNTRSLTYIDPDALTE), 125–150 (LPLLKFLGIFNTGLRIFPDLTKIYST), 151–174 (DIFFILEITDNPYMTSVPENAFQG), 176–199 (CNETLTLKLYNNGFTSVQGHAFNG), 200–223 (TKLDAVYLNKNKYLTAIDNDAFGG), 225–248 (YSGPTLLDVSSTSVTALPSKGLEH), and 264–288 (PLSLSFLHLTRADLSYPSHCCAFKN). N177 and N198 each carry an N-linked (GlcNAc...) asparagine glycan. N302 carries N-linked (GlcNAc...) asparagine glycosylation. A Sulfotyrosine modification is found at Y385. Residues 414-441 (YRFLRIVVWFVSLLALLGNIFVLLILLT) traverse the membrane as a helical segment. Residues 442-450 (SHYKLTVPR) lie on the Cytoplasmic side of the membrane. Residues 451–473 (FLMCNLAFADFCMGVYLLLIASV) form a helical membrane-spanning segment. Over 474–494 (DLYTHSEYYNHAIDWQTGPGC) the chain is Extracellular. C494 and C569 are joined by a disulfide. A helical membrane pass occupies residues 495–517 (NTAGFFTVFASELSVYTLTVITL). The Cytoplasmic portion of the chain corresponds to 518–537 (ERWYAITFAMRLDRKIRLRH). A helical transmembrane segment spans residues 538 to 560 (AYTIMAGGWVSCFLLALLPMVGI). Residues 561 to 580 (SSYAKVSICLPMDTDTPLAL) lie on the Extracellular side of the membrane. Residues 581–602 (AYIVLVLLLNVVAFVVVCSCYV) form a helical membrane-spanning segment. Residues 603-625 (KIYITVRNPQYNPRDKDTKIAKR) lie on the Cytoplasmic side of the membrane. The helical transmembrane segment at 626 to 649 (MAVLIFTDFMCMAPISFYALSALM) threads the bilayer. Residues 650-660 (NKPLITVTNSK) lie on the Extracellular side of the membrane. A helical membrane pass occupies residues 661-682 (ILLVLFYPLNSCANPFLYAIFT). Residues 683 to 764 (KAFQRDVFIL…ISEEYKQTAL (82 aa)) lie on the Cytoplasmic side of the membrane. A PDZ-binding motif is present at residues 762-764 (TAL).

The protein belongs to the G-protein coupled receptor 1 family. FSH/LSH/TSH subfamily. In terms of assembly, interacts with heterodimer GPHA2:GPHB5; this interaction stimulates cAMP production. Interacts (via the PDZ-binding motif) with SCRIB; regulates TSHR trafficking and function. Glycosylated. In terms of processing, sulfated. Sulfation on Tyr-385 plays a role in thyrotropin receptor binding and activation.

It localises to the cell membrane. Its subcellular location is the basolateral cell membrane. Its function is as follows. Receptor for the thyroid-stimulating hormone (TSH) or thyrotropin. Also acts as a receptor for the heterodimeric glycoprotein hormone (GPHA2:GPHB5) or thyrostimulin. The activity of this receptor is mediated by G proteins which activate adenylate cyclase. Plays a central role in controlling thyroid cell metabolism. This chain is Thyrotropin receptor (Tshr), found in Mus musculus (Mouse).